We begin with the raw amino-acid sequence, 361 residues long: Probable cytosolic iron-sulfur protein assembly protein 1 (361 aa).

7 WD repeats span residues 10-49 (AHSD…NFPQ), 56-105 (THKR…TEIL), 120-160 (GHEN…EEFE), 167-206 (DHQH…DDWS), 213-265 (GHEG…SIKH), 280-319 (VHQY…SWSI), and 327-361 (HGVH…IWKP).

It belongs to the WD repeat CIA1 family. As to quaternary structure, interacts with NAR1.

It is found in the cytoplasm. Its subcellular location is the nucleus. Functionally, essential component of the cytosolic iron-sulfur (Fe/S) protein assembly machinery. Required for the maturation of extramitochondrial Fe/S proteins. This Scheffersomyces stipitis (strain ATCC 58785 / CBS 6054 / NBRC 10063 / NRRL Y-11545) (Yeast) protein is Probable cytosolic iron-sulfur protein assembly protein 1.